Reading from the N-terminus, the 249-residue chain is Indole-3-glycerol phosphate synthase (249 aa).

Belongs to the TrpC family.

It carries out the reaction 1-(2-carboxyphenylamino)-1-deoxy-D-ribulose 5-phosphate + H(+) = (1S,2R)-1-C-(indol-3-yl)glycerol 3-phosphate + CO2 + H2O. Its pathway is amino-acid biosynthesis; L-tryptophan biosynthesis; L-tryptophan from chorismate: step 4/5. The polypeptide is Indole-3-glycerol phosphate synthase (Pyrobaculum aerophilum (strain ATCC 51768 / DSM 7523 / JCM 9630 / CIP 104966 / NBRC 100827 / IM2)).